We begin with the raw amino-acid sequence, 71 residues long: MSVYRRRLSPLKPNQVIDYQDVELLRTFITDQGKILPRRVTGLTAKQQRAVTKAIKQARVLALLPFVNRES.

It belongs to the bacterial ribosomal protein bS18 family. Part of the 30S ribosomal subunit.

The protein localises to the plastid. It localises to the cyanelle. The protein is Small ribosomal subunit protein bS18c (rps18) of Cyanophora paradoxa.